A 150-amino-acid chain; its full sequence is C-type lectin mosGCTL-7 (150 aa).

The first 17 residues, 1-17 (MQLVHVLVVLLSVVAHA), serve as a signal peptide directing secretion. Residues 18-140 (KKFFIPNLKA…CRGFKAYIVC (123 aa)) form the C-type lectin domain. N-linked (GlcNAc...) asparagine glycosylation occurs at N67. A disulfide bond links C111 and C131.

In terms of assembly, interacts with putative receptor-type tyrosine-protein phosphatase mosPTP-1; the interaction probably mediates the recruitment of Japanese encephalitis virus particles in complex with C-type lectin mosGCTL-7 to the cell surface. As to quaternary structure, (Microbial infection) Interacts with envelope protein E (glycosylated) of Japanese encephalitis virus in a calcium-dependent manner.

Its subcellular location is the secreted. Functionally, carbohydrate-binding protein. In terms of biological role, (Microbial infection) Facilitates Japanese encephalitis virus infection in mosquitoes probably via capturing viral particles and presenting them to a ligand on the cell surface, thereby facilitating viral entry. In Aedes aegypti (Yellowfever mosquito), this protein is C-type lectin mosGCTL-7.